A 364-amino-acid chain; its full sequence is D-alanine--D-alanine ligase A (364 aa).

An ATP-grasp domain is found at 145–348 (KRLLRDAGLN…YTDLITRLIE (204 aa)). ATP is bound at residue 175–230 (ESKLGLPLFVKPANQGSSVGVSKVTSEEQYTIAVDLAFEFDHKVIVEQGIKGREIE). Mg(2+)-binding residues include Asp-302, Glu-315, and Asn-317.

It belongs to the D-alanine--D-alanine ligase family. Mg(2+) serves as cofactor. It depends on Mn(2+) as a cofactor.

The protein localises to the cytoplasm. The enzyme catalyses 2 D-alanine + ATP = D-alanyl-D-alanine + ADP + phosphate + H(+). It participates in cell wall biogenesis; peptidoglycan biosynthesis. Cell wall formation. The protein is D-alanine--D-alanine ligase A of Escherichia coli O6:H1 (strain CFT073 / ATCC 700928 / UPEC).